A 365-amino-acid chain; its full sequence is Succinyl-diaminopimelate desuccinylase (365 aa).

H65 lines the Zn(2+) pocket. D67 is an active-site residue. D96 provides a ligand contact to Zn(2+). E126 (proton acceptor) is an active-site residue. Residues E127, E155, and H340 each contribute to the Zn(2+) site.

Belongs to the peptidase M20A family. DapE subfamily. In terms of assembly, homodimer. Requires Zn(2+) as cofactor. The cofactor is Co(2+).

The catalysed reaction is N-succinyl-(2S,6S)-2,6-diaminopimelate + H2O = (2S,6S)-2,6-diaminopimelate + succinate. Its pathway is amino-acid biosynthesis; L-lysine biosynthesis via DAP pathway; LL-2,6-diaminopimelate from (S)-tetrahydrodipicolinate (succinylase route): step 3/3. Its function is as follows. Catalyzes the hydrolysis of N-succinyl-L,L-diaminopimelic acid (SDAP), forming succinate and LL-2,6-diaminopimelate (DAP), an intermediate involved in the bacterial biosynthesis of lysine and meso-diaminopimelic acid, an essential component of bacterial cell walls. This Campylobacter jejuni subsp. jejuni serotype O:6 (strain 81116 / NCTC 11828) protein is Succinyl-diaminopimelate desuccinylase.